Here is a 428-residue protein sequence, read N- to C-terminus: Bifunctional protein GlmU (428 aa).

The segment at 1–221 (MDIVILAAGC…ERKAMGINTR (221 aa)) is pyrophosphorylase. Residues 6-9 (LAAG), Lys-20, Gln-74, 79-80 (GT), 103-105 (YGD), Gly-140, and Asn-219 contribute to the UDP-N-acetyl-alpha-D-glucosamine site. Asp-105 is a binding site for Mg(2+). Asn-219 is a binding site for Mg(2+). Residues 222-242 (ADLAIAESYFQCMKRASFLQS) are linker. Positions 243-428 (GVTLTSPDQV…TTKPEYKTRR (186 aa)) are N-acetyltransferase. 2 residues coordinate UDP-N-acetyl-alpha-D-glucosamine: Arg-308 and Lys-326. The active-site Proton acceptor is His-338. Positions 341 and 352 each coordinate UDP-N-acetyl-alpha-D-glucosamine. Residues Ala-355, 361–362 (NY), Ala-398, and Arg-415 contribute to the acetyl-CoA site.

It in the N-terminal section; belongs to the N-acetylglucosamine-1-phosphate uridyltransferase family. In the C-terminal section; belongs to the transferase hexapeptide repeat family. Homotrimer. Mg(2+) serves as cofactor.

It localises to the cytoplasm. The enzyme catalyses alpha-D-glucosamine 1-phosphate + acetyl-CoA = N-acetyl-alpha-D-glucosamine 1-phosphate + CoA + H(+). It carries out the reaction N-acetyl-alpha-D-glucosamine 1-phosphate + UTP + H(+) = UDP-N-acetyl-alpha-D-glucosamine + diphosphate. Its pathway is nucleotide-sugar biosynthesis; UDP-N-acetyl-alpha-D-glucosamine biosynthesis; N-acetyl-alpha-D-glucosamine 1-phosphate from alpha-D-glucosamine 6-phosphate (route II): step 2/2. The protein operates within nucleotide-sugar biosynthesis; UDP-N-acetyl-alpha-D-glucosamine biosynthesis; UDP-N-acetyl-alpha-D-glucosamine from N-acetyl-alpha-D-glucosamine 1-phosphate: step 1/1. It functions in the pathway bacterial outer membrane biogenesis; LPS lipid A biosynthesis. Catalyzes the last two sequential reactions in the de novo biosynthetic pathway for UDP-N-acetylglucosamine (UDP-GlcNAc). The C-terminal domain catalyzes the transfer of acetyl group from acetyl coenzyme A to glucosamine-1-phosphate (GlcN-1-P) to produce N-acetylglucosamine-1-phosphate (GlcNAc-1-P), which is converted into UDP-GlcNAc by the transfer of uridine 5-monophosphate (from uridine 5-triphosphate), a reaction catalyzed by the N-terminal domain. The sequence is that of Bifunctional protein GlmU from Anaplasma marginale (strain Florida).